A 353-amino-acid chain; its full sequence is Transcription factor MafA (353 aa).

Position 14 is a phosphoserine (serine 14). Lysine 32 participates in a covalent cross-link: Glycyl lysine isopeptide (Lys-Gly) (interchain with G-Cter in SUMO2). Disordered regions lie at residues 40-108 and 177-219; these read RFCH…GGTS and ADDM…GAGH. The segment covering 46–73 has biased composition (low complexity); that stretch reads PPGSLSSTPLSTPCSSVPSSPSFCAPSP. Position 49 is a phosphoserine (serine 49). A phosphothreonine mark is found at threonine 53 and threonine 57. Residues serine 61 and serine 65 each carry the phosphoserine modification. Residues 74 to 93 show a composition bias toward gly residues; it reads GTGGGGGAGGGGGSSQAGGA. Residues 183-210 are compositionally biased toward basic residues; the sequence is GHHHGAHHAAHHHHAAHHHHHHHHHHGG. The interval 254 to 279 is basic motif; the sequence is RLKQKRRTLKNRGYAQSCRFKRVQQR. Residues 254–317 enclose the bZIP domain; that stretch reads RLKQKRRTLK…DLYKEKYEKL (64 aa). The leucine-zipper stretch occupies residues 282-303; that stretch reads LESEKCQLQSQVEQLKLEVGRL. A disordered region spans residues 315–353; the sequence is EKLAGRGGPGSAGGAGFPREPSPPQAGPGGAKGTADFFL. The span at 319–330 shows a compositional bias: gly residues; sequence GRGGPGSAGGAG.

It belongs to the bZIP family. Maf subfamily. As to quaternary structure, forms homodimers or heterodimers. Monomers and dimers are able to bind DNA, but the off-rate is faster for monomers. Interacts with NEUROD1 and PDX1. May interact with MAFB, FOS, JUN and PCAF. In terms of processing, ubiquitinated, leading to its degradation by the proteasome. Phosphorylated at tyrosines. In terms of tissue distribution, expressed in the islets of Langerhans (at protein level).

Its subcellular location is the nucleus. In terms of biological role, transcription factor that activates insulin gene expression. Acts synergistically with NEUROD1/BETA2 and PDX1. Binds the insulin enhancer C1/RIPE3b element. Binds to consensus TRE-type MARE 5'-TGCTGACTCAGCA-3' DNA sequence. The sequence is that of Transcription factor MafA (MAFA) from Homo sapiens (Human).